A 419-amino-acid polypeptide reads, in one-letter code: Odorant receptor 56a (419 aa).

Topologically, residues 1–41 (MFKVKDLLLSPTTFEDPIFGTHLRYFQWYGYVASKDQNRPL) are cytoplasmic. Residues 42–62 (LSLIRCTILTASIWLSCALML) form a helical membrane-spanning segment. At 63-76 (ARVFRGYENLNDGA) the chain is on the extracellular side. Residues 77 to 97 (TSYATAVQYFAVSIAMFNAYV) traverse the membrane as a helical segment. The Cytoplasmic segment spans residues 98–137 (QRDKVISLLRVAHSDIQNLMHEADNREMELLVATQAYTRT). The chain crosses the membrane as a helical span at residues 138–158 (ITLLIWIPSVIAGLMAYSDCI). At 159–196 (YRSLFLPKSVFNVPAVRRGEEHPILLFQLFPFGELCDN) the chain is on the extracellular side. A helical membrane pass occupies residues 197–217 (FVVGYLGPWYALGLGITAIPL). Residues 218 to 292 (WHTFITCLMK…FVQELQYLIC (75 aa)) are Cytoplasmic-facing. A helical transmembrane segment spans residues 293 to 313 (VPVMADFIIFSVLICFLFFAL). Residues 314-323 (TVGVPSKMDY) lie on the Extracellular side of the membrane. Residues 324–344 (FFMFIYLFVMAGILWIYHWHA) traverse the membrane as a helical segment. Residues 345-389 (TLIVECHDELSLAYFSCGWYNFEMPLQKMLVFMMMHAQRPMKMRA) are Cytoplasmic-facing. Residues 390-410 (LLVDLNLRTFIDIGRGAYSYF) form a helical membrane-spanning segment. Residues 411-419 (NLLRSSHLY) lie on the Extracellular side of the membrane.

It belongs to the insect chemoreceptor superfamily. Heteromeric odorant receptor channel (TC 1.A.69) family. Or30a subfamily. Interacts with Orco. Complexes exist early in the endomembrane system in olfactory sensory neurons (OSNs), coupling these complexes to the conserved ciliary trafficking pathway. Expressed in olfactory sensory neurons in the antenna.

The protein localises to the cell membrane. Functionally, odorant receptor which mediates acceptance or avoidance behavior, depending on its substrates. The odorant receptor repertoire encodes a large collection of odor stimuli that vary widely in identity, intensity, and duration. May form a complex with Orco to form odorant-sensing units, providing sensitive and prolonged odorant signaling and calcium permeability. Specific receptor for geosmin, a microbial odorant that constitutes an ecologically relevant stimulus that alerts flies to the presence of harmful microbes and induces avoidance behavior. The sequence is that of Odorant receptor 56a (Or56a) from Drosophila melanogaster (Fruit fly).